The following is a 398-amino-acid chain: O-methyltransferase mpaG (398 aa).

Position 144 (Ser144) interacts with (4E,8E)-10-(4,6-dihydroxy-7-methyl-3-oxo-1,3-dihydro-2-benzofuran-5-yl)-4,8-dimethyldeca-4,8-dienoate. Residue Ser144 coordinates 4-farnesyl-3,5-dihydroxy-6-methylphthalide. Ser144 contacts 6-O-desmethylmycophenolate. Asn197 is a binding site for S-adenosyl-L-homocysteine. Residue Tyr199 participates in (4E,8E)-10-(4,6-dihydroxy-7-methyl-3-oxo-1,3-dihydro-2-benzofuran-5-yl)-4,8-dimethyldeca-4,8-dienoate binding. A 4-farnesyl-3,5-dihydroxy-6-methylphthalide-binding site is contributed by Tyr199. A 6-O-desmethylmycophenolate-binding site is contributed by Tyr199. Tyr203, Asp237, Gly239, His244, Asp245, Asp264, and Arg265 together coordinate S-adenosyl-L-homocysteine. Residue Asp264 coordinates S-adenosyl-L-methionine. Arg265 and Gln267 together coordinate (4E,8E)-10-(4,6-dihydroxy-7-methyl-3-oxo-1,3-dihydro-2-benzofuran-5-yl)-4,8-dimethyldeca-4,8-dienoate. Arg265 provides a ligand contact to 6-O-desmethylmycophenolate. S-adenosyl-L-homocysteine contacts are provided by Asp286, Ile287, and His302. Position 303 (Ser303) interacts with (4E,8E)-10-(4,6-dihydroxy-7-methyl-3-oxo-1,3-dihydro-2-benzofuran-5-yl)-4,8-dimethyldeca-4,8-dienoate. Ser303 contributes to the 4-farnesyl-3,5-dihydroxy-6-methylphthalide binding site. Ser303 contributes to the 6-O-desmethylmycophenolate binding site. His306 acts as the Proton acceptor in catalysis. Catalysis depends on residues Glu335 and Glu362.

It belongs to the class I-like SAM-binding methyltransferase superfamily. Cation-independent O-methyltransferase family. COMT subfamily. In terms of assembly, homodimer.

It is found in the cytoplasm. It localises to the cytosol. It catalyses the reaction (4E,8E)-10-(4,6-dihydroxy-7-methyl-3-oxo-1,3-dihydro-2-benzofuran-5-yl)-4,8-dimethyldeca-4,8-dienoate + S-adenosyl-L-methionine = (4E,8E)-10-(4-hydroxy-6-methoxy-7-methyl-3-oxo-1,3-dihydro-2-benzofuran-5-yl)-4,8-dimethyldeca-4,8-dienoate + S-adenosyl-L-homocysteine + H(+). The enzyme catalyses 4-farnesyl-3,5-dihydroxy-6-methylphthalide + S-adenosyl-L-methionine = 4-farnesyl-3,5-dihydroxy-6-methoxylphthalide + S-adenosyl-L-homocysteine + H(+). The catalysed reaction is 6-O-desmethylmycophenolate + S-adenosyl-L-methionine = mycophenolate + S-adenosyl-L-homocysteine + H(+). The protein operates within secondary metabolite biosynthesis; terpenoid biosynthesis. Its function is as follows. O-methyltransferase; part of the gene cluster that mediates the biosynthesis of mycophenolic acid (MPA), the first isolated antibiotic natural product in the world obtained from a culture of Penicillium brevicompactum in 1893. MpaG methylates farnesyl-DHMP-3C (FDHMP-3C) to yield MFDHMP-3C. The first step of the pathway is the synthesis of 5-methylorsellinic acid (5MOA) by the cytosolic polyketide synthase mpaC. 5MOA is then converted to the phthalide compound 5,7-dihydroxy-4,6-dimethylphthalide (DHMP) by the endoplasmic reticulum-bound cytochrome P450 monooxygenase mpaDE. MpaDE first catalyzes hydroxylation of 5-MOA to 4,6-dihydroxy-2-(hydroxymethyl)-3-methylbenzoic acid (DHMB). MpaDE then acts as a lactone synthase that catalyzes the ring closure to convert DHMB into DHMP. The next step is the prenylation of DHMP by the Golgi apparatus-associated prenyltransferase mpaA to yield farnesyl-DHMP (FDHMP). The ER-bound oxygenase mpaB then mediates the oxidative cleavage the C19-C20 double bond in FDHMP to yield FDHMP-3C via a mycophenolic aldehyde intermediate. The O-methyltransferase mpaG catalyzes the methylation of FDHMP-3C to yield MFDHMP-3C. MpaG and mpaB can also switch the order in which they act and, in this case, the conversion of FDHMP to MFDHMP-3C can take place via 5-O-methyl-FDHMP (MFDHMP). After the cytosolic methylation of FDHMP-3C, MFDHMP-3C enters into peroxisomes probably via free diffusion due to its low molecular weight. Upon a peroxisomal CoA ligation reaction, catalyzed by a beta-oxidation component enzyme acyl-CoA ligase ACL891, MFDHMP-3C-CoA would then be restricted to peroxisomes for the following beta-oxidation pathway steps. The peroxisomal beta-oxidation machinery than converts MFDHMP-3C-CoA into MPA_CoA, via a beta-oxidation chain-shortening process. Finally mpaH acts as a peroxisomal acyl-CoA hydrolase with high substrate specificity toward MPA-CoA to release the final product MPA. MpaH can also hydrolyze DMMPA-CoA to release demethylmycophenolic acid (DMMPA) that is further converted to MPA by mpaG. This is O-methyltransferase mpaG from Penicillium brevicompactum.